Here is a 351-residue protein sequence, read N- to C-terminus: Protein-glutamate methylesterase/protein-glutamine glutaminase (351 aa).

One can recognise a Response regulatory domain in the interval 3 to 120 (KTLVVDDSAL…EISKIENELV (118 aa)). Asp54 bears the 4-aspartylphosphate mark. The region spanning 160–347 (ILIGSSTGGP…EQIVRMIEVK (188 aa)) is the CheB-type methylesterase domain. Residues Ser165, His192, and Asp289 contribute to the active site.

The protein belongs to the CheB family. Post-translationally, phosphorylated by CheA. Phosphorylation of the N-terminal regulatory domain activates the methylesterase activity.

The protein localises to the cytoplasm. The enzyme catalyses [protein]-L-glutamate 5-O-methyl ester + H2O = L-glutamyl-[protein] + methanol + H(+). It catalyses the reaction L-glutaminyl-[protein] + H2O = L-glutamyl-[protein] + NH4(+). In terms of biological role, involved in chemotaxis. Part of a chemotaxis signal transduction system that modulates chemotaxis in response to various stimuli. Catalyzes the demethylation of specific methylglutamate residues introduced into the chemoreceptors (methyl-accepting chemotaxis proteins or MCP) by CheR. Also mediates the irreversible deamidation of specific glutamine residues to glutamic acid. The polypeptide is Protein-glutamate methylesterase/protein-glutamine glutaminase (Methanococcoides burtonii (strain DSM 6242 / NBRC 107633 / OCM 468 / ACE-M)).